We begin with the raw amino-acid sequence, 190 residues long: CASP-like protein 2U2 (190 aa).

Residues 1–10 are Cytoplasmic-facing; the sequence is MGEKMQGFQG. A helical transmembrane segment spans residues 11–31; sequence WSIGIRFLTSCVSIASLILLL. At 32 to 59 the chain is on the extracellular side; the sequence is KSKQTVQVSVGLDYVTQQVKYSDTSAFV. Residues 60–80 form a helical membrane-spanning segment; that stretch reads YLVFSDILVAVYCIVVLVGLI. At 81–94 the chain is on the cytoplasmic side; sequence PAALGKSHPGKAGQ. Residues 95 to 115 traverse the membrane as a helical segment; the sequence is WAIFIFDQVLAYVLLAAASSA. Residues 116-144 are Extracellular-facing; the sequence is TEVAYLADKGMAKTSWEAVCPRFAHFCHT. The chain crosses the membrane as a helical span at residues 145 to 165; that stretch reads VMASISLSFVAVLLLALLAVV. At 166 to 190 the chain is on the cytoplasmic side; that stretch reads SASGLFGRFYRRPLFAVKMRHNTLI.

It belongs to the Casparian strip membrane proteins (CASP) family. As to quaternary structure, homodimer and heterodimers.

The protein localises to the cell membrane. The sequence is that of CASP-like protein 2U2 from Pteridium aquilinum subsp. aquilinum (Bracken fern).